We begin with the raw amino-acid sequence, 815 residues long: SNF1 protein kinase subunit beta-1 (815 aa).

Residues 1 to 11 show a composition bias toward polar residues; the sequence is MGNSPSTQDPS. Disordered regions lie at residues 1–88 and 120–146; these read MGNS…TIDK and HDVG…TVKR. Gly-2 carries N-myristoyl glycine lipidation. Positions 12-31 are enriched in basic and acidic residues; the sequence is HSTKKEHGHHFHDAFNKDRQ. A compositionally biased stretch (polar residues) spans 32 to 42; that stretch reads GSITSQLFNNR. Ser-33 bears the Phosphoserine mark. Basic and acidic residues-rich tracts occupy residues 72–88 and 120–129; these read PSTD…TIDK and HDVGAPEEQV. A phosphoserine mark is found at Ser-181, Ser-198, Ser-200, Ser-206, Ser-209, and Ser-220. 3 disordered regions span residues 311-335, 363-389, and 410-444; these read HANN…NDDF, HHNK…FASL, and PLHP…SSIS. Over residues 313 to 326 the composition is skewed to low complexity; sequence NNNGNIENNTRNKG. Ser-331 is modified (phosphoserine). Basic residues predominate over residues 363-376; the sequence is HHNKTKKAQSKKIR. Low complexity-rich tracts occupy residues 377-389 and 433-444; these read SASN…FASL and HSNSMSSMSSIS. The segment at 473-716 is kinase-interacting sequence (KIS); required for interaction with SNF1; the sequence is VSTDIASALK…LQQGGNIDAE (244 aa). Ser-494 and Ser-497 each carry phosphoserine. Positions 581–616 are disordered; the sequence is EPTLDEELPKRPELKRFPSSSRKSSYYSAKGVERPS. Over residues 587 to 596 the composition is skewed to basic and acidic residues; it reads ELPKRPELKR. Positions 599–608 are enriched in low complexity; the sequence is SSSRKSSYYS. Ser-643 carries the phosphoserine modification. The association with SNF1 kinase complex (ASC) domain; required for interaction with SNF4 stretch occupies residues 724–804; sequence SRYPVPDLPI…FITQVVYAPC (81 aa).

Belongs to the 5'-AMP-activated protein kinase beta subunit family. In terms of assembly, component of the SNF1 kinase complex, a heterotrimeric complex composed of the catalytic alpha subunit SNF1, one of the three related beta subunits SIP1, SIP2 or GAL83, and the regulatory gamma subunit SNF4. The beta subunit serves as a bridge between the catalytic and the regulatory subunit. Interacts (via KIS domain) with SNF1. Interacts (via ASC domain) with SNF4. In terms of processing, phosphorylated by SNF1 in vitro.

The protein localises to the cytoplasm. The protein resides in the vacuole membrane. Functionally, beta subunit of the SNF1 kinase complex, which is required for transcriptional, metabolic, and developmental adaptations in response to glucose limitation. Has a structural role, mediating heterotrimer formation, and a regulatory role, defining carbon source-regulated subcellular location and substrate specificity of the SNF1 kinase complex. Promotes the PKA-regulated relocalization of the SNF1 kinase complex to the vacuolar membrane in response to various types of carbon stress. The polypeptide is SNF1 protein kinase subunit beta-1 (SIP1) (Saccharomyces cerevisiae (strain RM11-1a) (Baker's yeast)).